Consider the following 329-residue polypeptide: Galactosylgalactosylxylosylprotein 3-beta-glucuronosyltransferase 2 (329 aa).

Over 1 to 2 the chain is Cytoplasmic; it reads MK. Residues 3-23 form a helical; Signal-anchor for type II membrane protein membrane-spanning segment; the sequence is SALFSRFFILLPWILIVIIML. Over 24–329 the chain is Lumenal; the sequence is DVDTRRPAPP…YRLDTVKIEV (306 aa). A disordered region spans residues 45–87; the sequence is VGRGGARLPPRRGGPDSGPGRGWEKRNESRPHARPRPEPPLPT. Basic and acidic residues predominate over residues 66 to 81; the sequence is GWEKRNESRPHARPRP. Asn-71 carries N-linked (GlcNAc...) asparagine glycosylation. Residues 93–95, Asp-124, Arg-161, Arg-166, and 191–193 contribute to the UDP-alpha-D-glucuronate site; these read PTY and DDD. Asp-193 is a Mn(2+) binding site. The tract at residues 240–249 is interaction with galactose moiety of substrate glycoprotein; the sequence is WRADRPFAID. The active-site Proton donor/acceptor is Glu-279. N-linked (GlcNAc...) asparagine glycosylation occurs at Asn-298. 306-308 contacts UDP-alpha-D-glucuronate; it reads HTR.

Belongs to the glycosyltransferase 43 family. As to quaternary structure, homodimer. Mn(2+) serves as cofactor.

Its subcellular location is the golgi apparatus membrane. It catalyses the reaction 3-O-(beta-D-galactosyl-(1-&gt;3)-beta-D-galactosyl-(1-&gt;4)-beta-D-xylosyl)-L-seryl-[protein] + UDP-alpha-D-glucuronate = 3-O-(beta-D-GlcA-(1-&gt;3)-beta-D-Gal-(1-&gt;3)-beta-D-Gal-(1-&gt;4)-beta-D-Xyl)-L-seryl-[protein] + UDP + H(+). It functions in the pathway protein modification; protein glycosylation. In terms of biological role, involved in the biosynthesis of L2/HNK-1 carbohydrate epitope on both glycolipids and glycoproteins. In Canis lupus familiaris (Dog), this protein is Galactosylgalactosylxylosylprotein 3-beta-glucuronosyltransferase 2 (B3GAT2).